The primary structure comprises 297 residues: uncharacterized protein (297 aa).

2 consecutive transmembrane segments (helical) span residues 17 to 37 and 48 to 68; these read LALS…KEIF and TISG…GYSI. Residues 17-196 enclose the PNPLA domain; that stretch reads LALSGGGFYG…TLNYPITLFD (180 aa). Residues 21–26 carry the GXGXXG motif; the sequence is GGGFYG. Positions 51-55 match the GXSXG motif; that stretch reads GVSVG. Serine 53 (nucleophile) is an active-site residue. Residue asparagine 122 is glycosylated (N-linked (GlcNAc...) asparagine; by host). The Proton acceptor role is filled by aspartate 183. Positions 183–185 match the DGA/G motif; the sequence is DGG. Asparagine 239 carries N-linked (GlcNAc...) asparagine; by host glycosylation.

It is found in the membrane. Its function is as follows. Probable lipid hydrolase. This is an uncharacterized protein from Acanthamoeba polyphaga mimivirus (APMV).